A 485-amino-acid chain; its full sequence is UDP-N-acetylmuramoyl-L-alanyl-D-glutamate--2,6-diaminopimelate ligase (485 aa).

S28 is a UDP-N-acetyl-alpha-D-muramoyl-L-alanyl-D-glutamate binding site. 108 to 114 contributes to the ATP binding site; it reads GTNGKTS. Residues N147, 148–149, S175, and R183 each bind UDP-N-acetyl-alpha-D-muramoyl-L-alanyl-D-glutamate; that span reads TT. Residue K215 is modified to N6-carboxylysine. Meso-2,6-diaminopimelate contacts are provided by residues R374, 398 to 401, G449, and E453; that span reads DNPR. The Meso-diaminopimelate recognition motif motif lies at 398–401; it reads DNPR.

Belongs to the MurCDEF family. MurE subfamily. Mg(2+) serves as cofactor. Carboxylation is probably crucial for Mg(2+) binding and, consequently, for the gamma-phosphate positioning of ATP.

The protein resides in the cytoplasm. The enzyme catalyses UDP-N-acetyl-alpha-D-muramoyl-L-alanyl-D-glutamate + meso-2,6-diaminopimelate + ATP = UDP-N-acetyl-alpha-D-muramoyl-L-alanyl-gamma-D-glutamyl-meso-2,6-diaminopimelate + ADP + phosphate + H(+). It participates in cell wall biogenesis; peptidoglycan biosynthesis. Catalyzes the addition of meso-diaminopimelic acid to the nucleotide precursor UDP-N-acetylmuramoyl-L-alanyl-D-glutamate (UMAG) in the biosynthesis of bacterial cell-wall peptidoglycan. The polypeptide is UDP-N-acetylmuramoyl-L-alanyl-D-glutamate--2,6-diaminopimelate ligase (Fusobacterium nucleatum subsp. nucleatum (strain ATCC 25586 / DSM 15643 / BCRC 10681 / CIP 101130 / JCM 8532 / KCTC 2640 / LMG 13131 / VPI 4355)).